The following is a 520-amino-acid chain: O-methyltransferase cicE (520 aa).

Residues 300-301, D323, 355-356, and R371 contribute to the S-adenosyl-L-methionine site; these read GG and NF.

The protein belongs to the class I-like SAM-binding methyltransferase superfamily. Cation-independent O-methyltransferase family.

It functions in the pathway phytotoxin biosynthesis. In terms of biological role, O-methyltransferase; part of the gene cluster that mediates the biosynthesis of cichorine, a phytotoxin active against knapweed, corn, and soybeans. The first step in the pathway is performed by the non-reducing polyketide synthase pkbA that condenses one acetyl-CoA starter unit with 3 malonyl-CoA units. PkbA also catalyzes one methylation step to produce 3-methylorsellinate. The nonribosomal peptide synthase-like protein cicB, the cytochrome P450 monooxygenase cicH and the O-methyltransferase cicE are involved in the conversion of 3-methylorsellinate into nidulol. CicB converts 3-methylorsellinate to a yet unidentified intermediate, cicH may play a ring-closing role for cichorine and cicE is plausibly responsible for the methylation of one of the phenol groups. The oxidoreductase cicC acts downstream with still unidentified enzymes to further convert nidulol into cichorine. This is O-methyltransferase cicE from Emericella nidulans (strain FGSC A4 / ATCC 38163 / CBS 112.46 / NRRL 194 / M139) (Aspergillus nidulans).